The sequence spans 255 residues: NAD(P)H-quinone oxidoreductase subunit K, chloroplastic (255 aa).

Residues Cys47, Cys48, Cys112, and Cys143 each coordinate [4Fe-4S] cluster.

It belongs to the complex I 20 kDa subunit family. As to quaternary structure, NDH is composed of at least 16 different subunits, 5 of which are encoded in the nucleus. [4Fe-4S] cluster is required as a cofactor.

Its subcellular location is the plastid. The protein resides in the chloroplast thylakoid membrane. The catalysed reaction is a plastoquinone + NADH + (n+1) H(+)(in) = a plastoquinol + NAD(+) + n H(+)(out). The enzyme catalyses a plastoquinone + NADPH + (n+1) H(+)(in) = a plastoquinol + NADP(+) + n H(+)(out). NDH shuttles electrons from NAD(P)H:plastoquinone, via FMN and iron-sulfur (Fe-S) centers, to quinones in the photosynthetic chain and possibly in a chloroplast respiratory chain. The immediate electron acceptor for the enzyme in this species is believed to be plastoquinone. Couples the redox reaction to proton translocation, and thus conserves the redox energy in a proton gradient. In Zygnema circumcarinatum (Green alga), this protein is NAD(P)H-quinone oxidoreductase subunit K, chloroplastic.